The chain runs to 1400 residues: DNA-directed RNA polymerase subunit beta' (1400 aa).

Zn(2+)-binding residues include Cys71, Cys73, Cys86, and Cys89. 3 residues coordinate Mg(2+): Asp462, Asp464, and Asp466. Zn(2+) contacts are provided by Cys811, Cys885, Cys892, and Cys895.

Belongs to the RNA polymerase beta' chain family. As to quaternary structure, the RNAP catalytic core consists of 2 alpha, 1 beta, 1 beta' and 1 omega subunit. When a sigma factor is associated with the core the holoenzyme is formed, which can initiate transcription. It depends on Mg(2+) as a cofactor. Zn(2+) serves as cofactor.

It catalyses the reaction RNA(n) + a ribonucleoside 5'-triphosphate = RNA(n+1) + diphosphate. Its function is as follows. DNA-dependent RNA polymerase catalyzes the transcription of DNA into RNA using the four ribonucleoside triphosphates as substrates. The sequence is that of DNA-directed RNA polymerase subunit beta' from Brucella anthropi (strain ATCC 49188 / DSM 6882 / CCUG 24695 / JCM 21032 / LMG 3331 / NBRC 15819 / NCTC 12168 / Alc 37) (Ochrobactrum anthropi).